We begin with the raw amino-acid sequence, 349 residues long: Heat-inducible transcription repressor HrcA (349 aa).

It belongs to the HrcA family.

Negative regulator of class I heat shock genes (grpE-dnaK-dnaJ and groELS operons). Prevents heat-shock induction of these operons. The polypeptide is Heat-inducible transcription repressor HrcA (Mycoplasmoides gallisepticum (strain R(low / passage 15 / clone 2)) (Mycoplasma gallisepticum)).